Here is a 556-residue protein sequence, read N- to C-terminus: Arginine--tRNA ligase (556 aa).

The 'HIGH' region signature appears at 132-142 (ANPTGSLHLGH).

Belongs to the class-I aminoacyl-tRNA synthetase family. As to quaternary structure, monomer.

It localises to the cytoplasm. It catalyses the reaction tRNA(Arg) + L-arginine + ATP = L-arginyl-tRNA(Arg) + AMP + diphosphate. The protein is Arginine--tRNA ligase of Anoxybacillus flavithermus (strain DSM 21510 / WK1).